Here is a 407-residue protein sequence, read N- to C-terminus: RNA-binding motif, single-stranded-interacting protein 2 (407 aa).

The residue at position 1 (M1) is an N-acetylmethionine. Positions F14–D51 are disordered. Residues S37 to S47 are compositionally biased toward low complexity. RRM domains follow at residues T56–Q129 and T135–G220. S106 is modified (phosphoserine). 2 positions are modified to phosphoserine: S280 and S285. Over residues P374 to V392 the composition is skewed to low complexity. Residues P374–H398 form a disordered region.

It localises to the nucleus. This chain is RNA-binding motif, single-stranded-interacting protein 2 (RBMS2), found in Bos taurus (Bovine).